Consider the following 292-residue polypeptide: Ribosomal RNA small subunit methyltransferase A (292 aa).

Asn-28, Leu-30, Gly-55, Glu-76, Asp-101, and Asn-126 together coordinate S-adenosyl-L-methionine.

It belongs to the class I-like SAM-binding methyltransferase superfamily. rRNA adenine N(6)-methyltransferase family. RsmA subfamily.

Its subcellular location is the cytoplasm. It carries out the reaction adenosine(1518)/adenosine(1519) in 16S rRNA + 4 S-adenosyl-L-methionine = N(6)-dimethyladenosine(1518)/N(6)-dimethyladenosine(1519) in 16S rRNA + 4 S-adenosyl-L-homocysteine + 4 H(+). Its function is as follows. Specifically dimethylates two adjacent adenosines (A1518 and A1519) in the loop of a conserved hairpin near the 3'-end of 16S rRNA in the 30S particle. May play a critical role in biogenesis of 30S subunits. The polypeptide is Ribosomal RNA small subunit methyltransferase A (Bacillus thuringiensis (strain Al Hakam)).